The sequence spans 155 residues: Sweet protein mabinlin-2 (155 aa).

The N-terminal stretch at 1–20 (MAKLIFLFATLALFVLLANA) is a signal peptide. A propeptide spanning residues 21–35 (SIQTTVIEVDEEEDN) is cleaved from the precursor. Residue Q36 is modified to Pyrrolidone carboxylic acid. 4 disulfides stabilise this stretch: C40–C103, C53–C92, C93–C141, and C105–C149. A disordered region spans residues 64 to 86 (GGQPDELEDEVEDDNDDENQPRR). The span at 68–81 (DELEDEVEDDNDDE) shows a compositional bias: acidic residues. The propeptide occupies 69–82 (ELEDEVEDDNDDEN). The residue at position 83 (Q83) is a Pyrrolidone carboxylic acid. Residue P155 is a propeptide.

This sequence belongs to the 2S seed storage albumins family. Heterodimer of a small A and a large B chain linked by disulfide bonds.

Heat stable 2S seed storage protein having sweetness-inducing activity. The chain is Sweet protein mabinlin-2 from Capparis masaikai (Mabinlang).